We begin with the raw amino-acid sequence, 286 residues long: MAAYYRWKSFEENEDRPEKPRRYGVTEMRGPHYSVLSQNLLQEIFESMGQFVDGLKFSGGSNSLIPKSFIKQAIEMAHEHGVYVSTGDWAEHMLRSGPSAFKDYVEECKQLGFDTIELNANLLEVPEETLLRYVRLIKNGGLRAKPMFAVKFNKSDIPGRNRAFGSYVVPEPRSSEFVEDIDLLIRKAERCLEAGADTIMIDADDVCKYADSLRADIIAKVIGRLGIEKTMFEASDAKLVEWFIKRYGPNVNLYVDHSQIMDLECLRGRHLGKDHQSVLSSSYFLF.

It belongs to the phosphosulfolactate synthase family.

In terms of biological role, transactivator required, together with HSP101, for long-term acquired thermotolerance (LAT) maintenance, probably by regulating heat-inducible genes expression, thus being a cellular component of thermomemory. The polypeptide is Protein HEAT-STRESS-ASSOCIATED 32 (Arabidopsis thaliana (Mouse-ear cress)).